Here is a 656-residue protein sequence, read N- to C-terminus: Protein NO VEIN-LIKE (656 aa).

The tract at residues 283–375 is disordered; that stretch reads DKDYCGKHTR…HVKQKIPKSA (93 aa). Acidic residues predominate over residues 299 to 308; it reads EENDSADYEV. Residues 342–353 show a composition bias toward basic and acidic residues; that stretch reads ESRNHEKSDSPK. Over residues 354–371 the composition is skewed to basic residues; that stretch reads LLRRGPSKLRRGHVKQKI.

This chain is Protein NO VEIN-LIKE, found in Arabidopsis thaliana (Mouse-ear cress).